A 176-amino-acid polypeptide reads, in one-letter code: Inner membrane-spanning protein YciB (176 aa).

The next 5 membrane-spanning stretches (helical) occupy residues 3–23, 49–69, 72–92, 118–138, and 149–169; these read FLFDLFPIILFFAAFKLWGIF, TMLWVSLGVIVVFGGATLVLH, KFIQWKPTVLYWLFAVGLVAA, KLNLAWAAFFAALGVTNLYVV, and FKLFGTTGAIIVFVILQSLWL.

This sequence belongs to the YciB family.

The protein localises to the cell inner membrane. In terms of biological role, plays a role in cell envelope biogenesis, maintenance of cell envelope integrity and membrane homeostasis. The chain is Inner membrane-spanning protein YciB from Burkholderia thailandensis (strain ATCC 700388 / DSM 13276 / CCUG 48851 / CIP 106301 / E264).